The sequence spans 977 residues: Aspartate, glycine, lysine and serine-rich protein (977 aa).

A disordered region spans residues 23 to 116; the sequence is GVLPDVDSGF…PITNLGSSTS (94 aa). The span at 37-50 shows a compositional bias: basic and acidic residues; sequence EETKSEPKQPDTKP. Over residues 51–63 the composition is skewed to polar residues; the sequence is EQPSVSKPDSSVN. Residue N136 is glycosylated (N-linked (GlcNAc...) asparagine). Disordered regions lie at residues 246–767 and 780–922; these read AGGG…TSRG and GGGK…GSGL. The span at 251–278 shows a compositional bias: low complexity; it reads YYSDSSDSSDSDSSGSDSSESGSSESGS. Residues 309–325 are compositionally biased toward polar residues; that stretch reads NGSPDNGTPGSGSSRYT. Residues 410–427 show a composition bias toward acidic residues; sequence LEDELLGSDSSDEDDIDD. The span at 428-443 shows a compositional bias: gly residues; sequence GLGGLGLGAGPGGPGG. Basic residues-rich tracts occupy residues 447 to 457 and 465 to 540; these read TPKHKPRTDKK and KRKP…VQRK. A compositionally biased stretch (basic and acidic residues) spans 541 to 557; sequence QPREYKQESPEVEREHS. Over residues 572–583 the composition is skewed to low complexity; the sequence is KILITSLTSSRG. Gly residues predominate over residues 591-643; sequence DGSGSGNGGGDDGNGGGAGNGGGAGNGGGAGNGGGAGNGGGNGGGGNGGGGND. The span at 660–675 shows a compositional bias: basic and acidic residues; sequence EHRNRCEDDDDYREKC. Over residues 700–724 the composition is skewed to low complexity; that stretch reads SGSSSSSSATESESSSTSTTPSTSS. Composition is skewed to polar residues over residues 730 to 744, 758 to 767, and 785 to 801; these read ILSTLSGRSQKTRSG, SRPSVATSRG, and STGTTVTSKPSTGTSSA. Low complexity-rich tracts occupy residues 803–814, 822–857, and 870–907; these read GLDLSGLLGQLG, GPKPDSKPSTGSPSTTSKPSTGSSSGPGLDLSGLLG, and KKPTASSKPTAPSTPSKSTGSSPGKGLDLSGLLGKLSP.

As to expression, component of the acid-insoluble and acid-soluble organic matrix of calcified layers of the shell (at protein level).

The protein localises to the secreted. This is Aspartate, glycine, lysine and serine-rich protein from Lottia gigantea (Giant owl limpet).